A 144-amino-acid polypeptide reads, in one-letter code: 6-pyruvoyl tetrahydrobiopterin synthase (144 aa).

Serine 18 is subject to Phosphoserine. A Zn(2+)-binding site is contributed by histidine 23. Serine 27 carries the post-translational modification Phosphoserine. Cysteine 42 functions as the Proton acceptor in the catalytic mechanism. Positions 48 and 50 each coordinate Zn(2+). Histidine 89 functions as the Charge relay system in the catalytic mechanism. Position 127 is a phosphotyrosine (tyrosine 127). Glutamate 133 serves as the catalytic Charge relay system.

The protein belongs to the PTPS family. Homodimer. Homohexamer formed of two homotrimers in a head to head fashion. Zn(2+) is required as a cofactor. Post-translationally, phosphorylation of Ser-18 is required for maximal enzyme activity.

The catalysed reaction is 7,8-dihydroneopterin 3'-triphosphate = 6-pyruvoyl-5,6,7,8-tetrahydropterin + triphosphate + H(+). It functions in the pathway cofactor biosynthesis; tetrahydrobiopterin biosynthesis; tetrahydrobiopterin from 7,8-dihydroneopterin triphosphate: step 1/3. Functionally, involved in the biosynthesis of tetrahydrobiopterin, an essential cofactor of aromatic amino acid hydroxylases. Catalyzes the transformation of 7,8-dihydroneopterin triphosphate into 6-pyruvoyl tetrahydropterin. The sequence is that of 6-pyruvoyl tetrahydrobiopterin synthase from Mus musculus (Mouse).